Reading from the N-terminus, the 285-residue chain is Probable endonuclease 4 (285 aa).

His69, His109, Glu145, Asp179, His182, His216, Asp229, His231, and Glu261 together coordinate Zn(2+).

This sequence belongs to the AP endonuclease 2 family. The cofactor is Zn(2+).

It catalyses the reaction Endonucleolytic cleavage to 5'-phosphooligonucleotide end-products.. Its function is as follows. Endonuclease IV plays a role in DNA repair. It cleaves phosphodiester bonds at apurinic or apyrimidinic (AP) sites, generating a 3'-hydroxyl group and a 5'-terminal sugar phosphate. In Salmonella heidelberg (strain SL476), this protein is Probable endonuclease 4.